Consider the following 98-residue polypeptide: MQMTMINMILAFIMATTGLLMFRSHFMSSLLCLEGMMLSIFILMSISTLNFNNSLAMMFPLVLLVFAACEAAIGLSLLVKISNTYGTDYVQNLNLLQC.

3 consecutive transmembrane segments (helical) span residues 2 to 22, 26 to 46, and 59 to 79; these read QMTMINMILAFIMATTGLLMF, FMSSLLCLEGMMLSIFILMSI, and FPLVLLVFAACEAAIGLSLLV.

It belongs to the complex I subunit 4L family. In terms of assembly, core subunit of respiratory chain NADH dehydrogenase (Complex I) which is composed of 45 different subunits.

The protein localises to the mitochondrion inner membrane. The enzyme catalyses a ubiquinone + NADH + 5 H(+)(in) = a ubiquinol + NAD(+) + 4 H(+)(out). Its function is as follows. Core subunit of the mitochondrial membrane respiratory chain NADH dehydrogenase (Complex I) which catalyzes electron transfer from NADH through the respiratory chain, using ubiquinone as an electron acceptor. Part of the enzyme membrane arm which is embedded in the lipid bilayer and involved in proton translocation. In Echinosorex gymnura (Moon rat), this protein is NADH-ubiquinone oxidoreductase chain 4L (MT-ND4L).